The chain runs to 27 residues: Conotoxin flf14b (27 aa).

Intrachain disulfides connect Cys6–Cys26 and Cys10–Cys22.

Expressed by the venom duct.

The protein resides in the secreted. This is Conotoxin flf14b from Conus anabathrum floridanus (Florida cone).